We begin with the raw amino-acid sequence, 299 residues long: F-actin-capping protein subunit alpha-3 (299 aa).

Phosphoserine is present on serine 290.

Belongs to the F-actin-capping protein alpha subunit family. Component of the F-actin capping complex, composed of a heterodimer of an alpha and a beta subunit. Component of the WASH complex, composed of F-actin-capping protein subunit alpha (CAPZA1, CAPZA2 or CAPZA3), F-actin-capping protein subunit beta (CAPZB), WASHC1, WASHC2, WASHC3, WASHC4 and WASHC5.

Its function is as follows. F-actin-capping proteins bind in a Ca(2+)-independent manner to the fast growing ends of actin filaments (barbed end) thereby blocking the exchange of subunits at these ends. Unlike other capping proteins (such as gelsolin and severin), these proteins do not sever actin filaments. May play a role in the morphogenesis of spermatid. The protein is F-actin-capping protein subunit alpha-3 (CAPZA3) of Macaca fascicularis (Crab-eating macaque).